A 227-amino-acid chain; its full sequence is General transcription factor 3C polypeptide 6 (227 aa).

The disordered stretch occupies residues 157–227; the sequence is DEAAGPASDK…DGNVSQNNQS (71 aa). Residues 186 to 195 are compositionally biased toward basic and acidic residues; the sequence is EQEKVEHSEV. Polar residues predominate over residues 203 to 227; the sequence is ETPSEMESSVFMGTQDGNVSQNNQS.

Belongs to the TFIIIC subunit 6 family. In terms of assembly, part of the TFIIIC subcomplex TFIIIC2, consisting of six subunits, GTF3C1, GTF3C2, GTF3C3, GTF3C4, GTF3C5 and GTF3C6. Interacts with GTF3C4 and GTF3C5.

It localises to the nucleus. Its function is as follows. Involved in RNA polymerase III-mediated transcription. Integral, tightly associated component of the DNA-binding TFIIIC2 subcomplex that directly binds tRNA and virus-associated RNA promoters. The chain is General transcription factor 3C polypeptide 6 from Mus musculus (Mouse).